The following is a 313-amino-acid chain: Malate dehydrogenase (313 aa).

NAD(+) contacts are provided by residues 11-16 and Asp-35; that span reads GSGNIG. Substrate-binding residues include Arg-84 and Arg-90. NAD(+) is bound by residues Asn-97 and 120–122; that span reads VTN. Positions 122 and 153 each coordinate substrate. The active-site Proton acceptor is His-177.

Belongs to the LDH/MDH superfamily. MDH type 3 family.

The catalysed reaction is (S)-malate + NAD(+) = oxaloacetate + NADH + H(+). Catalyzes the reversible oxidation of malate to oxaloacetate. The sequence is that of Malate dehydrogenase from Ehrlichia ruminantium (strain Welgevonden).